The primary structure comprises 440 residues: Exodeoxyribonuclease 7 large subunit (440 aa).

This sequence belongs to the XseA family. Heterooligomer composed of large and small subunits.

The protein localises to the cytoplasm. The catalysed reaction is Exonucleolytic cleavage in either 5'- to 3'- or 3'- to 5'-direction to yield nucleoside 5'-phosphates.. Bidirectionally degrades single-stranded DNA into large acid-insoluble oligonucleotides, which are then degraded further into small acid-soluble oligonucleotides. The sequence is that of Exodeoxyribonuclease 7 large subunit from Ralstonia nicotianae (strain ATCC BAA-1114 / GMI1000) (Ralstonia solanacearum).